The primary structure comprises 282 residues: 4-diphosphocytidyl-2-C-methyl-D-erythritol kinase (282 aa).

Lysine 11 is an active-site residue. ATP is bound at residue 95–105 (PMGGGVGGGSS). Residue aspartate 137 is part of the active site.

The protein belongs to the GHMP kinase family. IspE subfamily.

It catalyses the reaction 4-CDP-2-C-methyl-D-erythritol + ATP = 4-CDP-2-C-methyl-D-erythritol 2-phosphate + ADP + H(+). It functions in the pathway isoprenoid biosynthesis; isopentenyl diphosphate biosynthesis via DXP pathway; isopentenyl diphosphate from 1-deoxy-D-xylulose 5-phosphate: step 3/6. Catalyzes the phosphorylation of the position 2 hydroxy group of 4-diphosphocytidyl-2C-methyl-D-erythritol. The polypeptide is 4-diphosphocytidyl-2-C-methyl-D-erythritol kinase (Haemophilus ducreyi (strain 35000HP / ATCC 700724)).